Here is a 234-residue protein sequence, read N- to C-terminus: Biosynthetic peptidoglycan transglycosylase (234 aa).

Residues 8–28 (VIGCFAAGVVALNLYFFAAIA) form a helical membrane-spanning segment.

It belongs to the glycosyltransferase 51 family.

The protein localises to the cell inner membrane. It carries out the reaction [GlcNAc-(1-&gt;4)-Mur2Ac(oyl-L-Ala-gamma-D-Glu-L-Lys-D-Ala-D-Ala)](n)-di-trans,octa-cis-undecaprenyl diphosphate + beta-D-GlcNAc-(1-&gt;4)-Mur2Ac(oyl-L-Ala-gamma-D-Glu-L-Lys-D-Ala-D-Ala)-di-trans,octa-cis-undecaprenyl diphosphate = [GlcNAc-(1-&gt;4)-Mur2Ac(oyl-L-Ala-gamma-D-Glu-L-Lys-D-Ala-D-Ala)](n+1)-di-trans,octa-cis-undecaprenyl diphosphate + di-trans,octa-cis-undecaprenyl diphosphate + H(+). It participates in cell wall biogenesis; peptidoglycan biosynthesis. Functionally, peptidoglycan polymerase that catalyzes glycan chain elongation from lipid-linked precursors. The sequence is that of Biosynthetic peptidoglycan transglycosylase from Ralstonia nicotianae (strain ATCC BAA-1114 / GMI1000) (Ralstonia solanacearum).